The primary structure comprises 332 residues: Thiosulfate-binding protein (332 aa).

The N-terminal stretch at 1-22 (MKRLFSASLLAAGLALGGAAHA) is a signal peptide.

Belongs to the prokaryotic sulfate-binding protein family.

The protein localises to the periplasm. Functionally, binds thiosulfate specifically and with high affinity. Has no detectable affinity for sulfate. This chain is Thiosulfate-binding protein, found in Pseudomonas aeruginosa (strain ATCC 15692 / DSM 22644 / CIP 104116 / JCM 14847 / LMG 12228 / 1C / PRS 101 / PAO1).